The following is a 387-amino-acid chain: Cysteine desulfurase (387 aa).

Residues 72-73 (GT), N152, Q180, and 200-202 (SAH) contribute to the pyridoxal 5'-phosphate site. Position 203 is an N6-(pyridoxal phosphate)lysine (K203). T238 is a binding site for pyridoxal 5'-phosphate. C323 acts as the Cysteine persulfide intermediate in catalysis. C323 provides a ligand contact to [2Fe-2S] cluster.

This sequence belongs to the class-V pyridoxal-phosphate-dependent aminotransferase family. NifS/IscS subfamily. As to quaternary structure, homodimer. Pyridoxal 5'-phosphate is required as a cofactor.

It catalyses the reaction (sulfur carrier)-H + L-cysteine = (sulfur carrier)-SH + L-alanine. Functionally, catalyzes the removal of elemental sulfur atoms from cysteine to produce alanine. Seems to participate in the biosynthesis of the nitrogenase metalloclusters by providing the inorganic sulfur required for the Fe-S core formation. The sequence is that of Cysteine desulfurase from Cereibacter sphaeroides (Rhodobacter sphaeroides).